A 344-amino-acid polypeptide reads, in one-letter code: Ubiquitin-associated domain-containing protein 2 (344 aa).

A signal peptide spans 1–35 (MFTSTGSSGLYKAPLSKSLLLVPSALSLLLALLLP). Residues 36-91 (HCQKLFVYDLHAVKNDFQIWRLICGRIICLDLKDTFCSSLLIYNFRIFERRYGSRK) lie on the Extracellular side of the membrane. Residues 92–112 (FASFLLGSWVLSALFDFLLIE) traverse the membrane as a helical segment. Over 113–125 (AMQYFFGITAASN) the chain is Cytoplasmic. The chain crosses the membrane as a helical span at residues 126 to 146 (LPSGFLAPVFALFVPFYCSIP). At 147–163 (RVQVAQILGPLSITNKT) the chain is on the extracellular side. An N-linked (GlcNAc...) asparagine glycan is attached at Asn161. Residues 164–184 (LIYILGLQLFTSGSYIWIVAI) form a helical membrane-spanning segment. The Cytoplasmic segment spans residues 185 to 344 (SGLMSGLCYD…NVATNFLLQH (160 aa)). The 41-residue stretch at 304–344 (EVSEEQVARLMEMGFSRGDALEALRASNNDLNVATNFLLQH) folds into the UBA domain.

Interacts with FAF2. Interacts with LMBR1L. Interacts with AMFR and VCP.

It localises to the endoplasmic reticulum membrane. Functionally, restricts trafficking of FAF2 from the endoplasmic reticulum to lipid droplets. In association with LMBR1L and E3 ubiquitin-protein ligase AMFR, negatively regulates the canonical Wnt signaling pathway in the lymphocytes by promoting the ubiquitin-mediated degradation of CTNNB1 and Wnt receptors FZD6 and LRP6. This chain is Ubiquitin-associated domain-containing protein 2 (UBAC2), found in Homo sapiens (Human).